Reading from the N-terminus, the 147-residue chain is uncharacterized protein (147 aa).

The region spanning 1–137 is the HTH marR-type domain; the sequence is MRDNTIGSLI…LYELMTKVHK (137 aa). The segment at residues 53-76 is a DNA-binding region (H-T-H motif); it reads QMELAEKVTVTQGGISRMLTRLEK.

This is an uncharacterized protein from Bacillus thuringiensis subsp. konkukian (strain 97-27).